A 473-amino-acid polypeptide reads, in one-letter code: Ribulose bisphosphate carboxylase large chain 1 (473 aa).

Substrate-binding residues include Asn-116 and Thr-166. Residue Lys-168 is the Proton acceptor of the active site. Substrate is bound at residue Lys-170. Mg(2+)-binding residues include Lys-194, Asp-196, and Glu-197. Lys-194 carries the N6-carboxylysine modification. The active-site Proton acceptor is the His-287. 3 residues coordinate substrate: Arg-288, His-320, and Ser-372.

This sequence belongs to the RuBisCO large chain family. Type I subfamily. As to quaternary structure, heterohexadecamer of 8 large chains and 8 small chains. It depends on Mg(2+) as a cofactor.

It carries out the reaction 2 (2R)-3-phosphoglycerate + 2 H(+) = D-ribulose 1,5-bisphosphate + CO2 + H2O. The catalysed reaction is D-ribulose 1,5-bisphosphate + O2 = 2-phosphoglycolate + (2R)-3-phosphoglycerate + 2 H(+). Its function is as follows. RuBisCO catalyzes two reactions: the carboxylation of D-ribulose 1,5-bisphosphate, the primary event in carbon dioxide fixation, as well as the oxidative fragmentation of the pentose substrate. Both reactions occur simultaneously and in competition at the same active site. The protein is Ribulose bisphosphate carboxylase large chain 1 of Nitrobacter winogradskyi (strain ATCC 25391 / DSM 10237 / CIP 104748 / NCIMB 11846 / Nb-255).